We begin with the raw amino-acid sequence, 290 residues long: MASITLTPSEKDIQAFLEHYQTSLAPSKNPYIRYFLKLPQATVSIYTSGKILLQGEGAEKYASFFGYQAVEQTSGQNLPLIGTDEVGNGSYFGGLAVVAAFVTPDQHDFLRKLGVGDSKTLTDQKIRQIAPILKEKIQHQALLLSPSKYNEVIGDRYNAVSVKVALHNQAIYLLLQKGVQPEKIVIDAFTSAKNYDKYLAQETNRFSNPISLEEKAEGKYLAVAVSSVIARDLFLENLENLERELGYQLPSGAGTASDKVASQILQAYGMQGLNFCAKLHFKNTEKAKNA.

The region spanning 78 to 290 (LPLIGTDEVG…FKNTEKAKNA (213 aa)) is the RNase H type-2 domain. D84, E85, and D187 together coordinate a divalent metal cation.

Belongs to the RNase HII family. RnhC subfamily. Requires Mn(2+) as cofactor. The cofactor is Mg(2+).

It is found in the cytoplasm. The catalysed reaction is Endonucleolytic cleavage to 5'-phosphomonoester.. In terms of biological role, endonuclease that specifically degrades the RNA of RNA-DNA hybrids. The protein is Ribonuclease HIII of Streptococcus pneumoniae (strain CGSP14).